The sequence spans 266 residues: Nuclease (266 aa).

The N-terminal stretch at 1–21 (MRFNNKMLALAALLFAAQASA) is a signal peptide. A disulfide bond links cysteine 30 and cysteine 34. Histidine 110 (proton acceptor) is an active-site residue. Residue asparagine 140 participates in Mg(2+) binding. Cysteine 222 and cysteine 264 are joined by a disulfide.

It belongs to the DNA/RNA non-specific endonuclease family. In terms of assembly, homodimer. Mg(2+) is required as a cofactor.

It localises to the secreted. The catalysed reaction is Endonucleolytic cleavage to 5'-phosphomononucleotide and 5'-phosphooligonucleotide end-products.. In terms of biological role, catalyzes the hydrolysis of both DNA and RNA, double- or single-stranded, at the 3'position of the phosphodiester bond to produce 5'-phosphorylated mono-, di-, tri- and tetranucleotides. DNA is a slightly better substrate than RNA. The polypeptide is Nuclease (nucA) (Serratia marcescens).